A 594-amino-acid chain; its full sequence is Segmentation polarity homeobox protein engrailed (594 aa).

7 disordered regions span residues Met1–Glu64, Ile76–Ile127, Lys141–Gly164, His198–Ala217, Ile231–Ser299, Ala387–Asn458, and Asp474–Thr501. Residues Ser22–Pro60 show a composition bias toward low complexity. Residues Pro92 to His112 show a composition bias toward basic residues. The segment covering His151–Gly164 has biased composition (pro residues). The span at Leu237–Thr247 shows a compositional bias: polar residues. Composition is skewed to low complexity over residues Ala278–Ser299 and Ala387–Ala402. Composition is skewed to polar residues over residues Ser426 to Asp436 and Glu448 to Asn458. The span at Gln487–Pro499 shows a compositional bias: basic and acidic residues. The segment at residues Glu496–Ser555 is a DNA-binding region (homeobox).

This sequence belongs to the engrailed homeobox family.

The protein localises to the nucleus. Its function is as follows. This protein specifies the body segmentation pattern. It is required for the development of the central nervous system. Transcriptional regulator that repress activated promoters. The sequence is that of Segmentation polarity homeobox protein engrailed (en) from Anopheles gambiae (African malaria mosquito).